The primary structure comprises 960 residues: Ran GTPase-activating protein 2 (960 aa).

LRR repeat units lie at residues 69–92 (HLNLEVLDFRGNTLSVLAGKLIAE), 132–156 (GCRLTTLDLSDNAFGAGLSTSLYNF), 162–185 (LYSLENLILNNNGLGLAGKTVGKA), 227–254 (LGTLEEIRLPQNGIRDDGIIALAEAFRM), and 313–340 (RDCLKKVVLSGNNITSDVIDEIGACFNS). The disordered stretch occupies residues 370 to 408 (NIDFGRRGDDELLSSDEEEEQGAEDASMEEDAFNTSRET). The segment covering 380–401 (ELLSSDEEEEQGAEDASMEEDA) has biased composition (acidic residues). 4 LRR repeats span residues 475–498 (ASSMKALELRGNTLGIAAGNVIAK), 538–561 (GCKIKELDLSDNAFGPIGADALKD), 568–595 (SFSLEVLKLNNNGLGIGGKQIAKSLTEC), and 663–685 (NRNLRYLWLEDNTVLPKGAKALA). A disordered region spans residues 777 to 819 (PENVNVGDEDDDLGSLDGDQEEYNSKSSDSEDADLDDDDEDDD). Composition is skewed to acidic residues over residues 783–798 (GDEDDDLGSLDGDQEE) and 806–819 (SEDADLDDDDEDDD).

It is found in the nucleus. GTPase system comprising ran-1, ran-2 and ran-3 is essential in nucleocytoplasmic trafficking. Ran-2 is a GTPase activator for the nuclear RAS-related regulatory protein Ran, converting it to the putatively inactive GDP-bound state. Required for correct chromosome alignment and segregation on the metaphase plate. In Caenorhabditis elegans, this protein is Ran GTPase-activating protein 2 (ran-2).